Consider the following 425-residue polypeptide: Histidine--tRNA ligase (425 aa).

Belongs to the class-II aminoacyl-tRNA synthetase family. Homodimer.

It localises to the cytoplasm. The catalysed reaction is tRNA(His) + L-histidine + ATP = L-histidyl-tRNA(His) + AMP + diphosphate + H(+). This is Histidine--tRNA ligase from Shewanella sp. (strain MR-7).